We begin with the raw amino-acid sequence, 156 residues long: Small ribosomal subunit protein uS7 (156 aa).

This sequence belongs to the universal ribosomal protein uS7 family. In terms of assembly, part of the 30S ribosomal subunit. Contacts proteins S9 and S11.

Functionally, one of the primary rRNA binding proteins, it binds directly to 16S rRNA where it nucleates assembly of the head domain of the 30S subunit. Is located at the subunit interface close to the decoding center, probably blocks exit of the E-site tRNA. This is Small ribosomal subunit protein uS7 from Enterobacter sp. (strain 638).